Consider the following 139-residue polypeptide: Putative pre-16S rRNA nuclease (139 aa).

This sequence belongs to the YqgF nuclease family.

The protein localises to the cytoplasm. Could be a nuclease involved in processing of the 5'-end of pre-16S rRNA. The sequence is that of Putative pre-16S rRNA nuclease from Legionella pneumophila (strain Lens).